The sequence spans 80 residues: Sulfur carrier protein TusA (80 aa).

Catalysis depends on cysteine 17, which acts as the Cysteine persulfide intermediate.

Belongs to the sulfur carrier protein TusA family.

It localises to the cytoplasm. Functionally, sulfur carrier protein which probably makes part of a sulfur-relay system. This Pseudomonas putida (strain GB-1) protein is Sulfur carrier protein TusA.